A 223-amino-acid polypeptide reads, in one-letter code: 26S proteasome non-ATPase regulatory subunit 9 (223 aa).

Positions 103 to 121 (RDKEKQARDMAEAHKEAMS) are enriched in basic and acidic residues. A disordered region spans residues 103-141 (RDKEKQARDMAEAHKEAMSRKLGQSESQGPPRAFAKVNS). The region spanning 108–195 (QARDMAEAHK…KPLNVTVIRR (88 aa)) is the PDZ domain. Ser129 bears the Phosphoserine mark.

It belongs to the proteasome subunit p27 family. As to quaternary structure, interacts with PSMC3. Part of a transient complex (modulator) containing PSMD9, PSMC6 and PSMC3 formed during the assembly of the 26S proteasome. Expressed in all tissues tested, highly expressed in liver and kidney.

Functionally, acts as a chaperone during the assembly of the 26S proteasome, specifically of the base subcomplex of the PA700/19S regulatory complex (RC). During the base subcomplex assembly is part of an intermediate PSMD9:PSMC6:PSMC3 module, also known as modulator trimer complex; PSMD9 is released during the further base assembly process. This is 26S proteasome non-ATPase regulatory subunit 9 (PSMD9) from Homo sapiens (Human).